The primary structure comprises 258 residues: Probable glycerol uptake facilitator protein (258 aa).

2 helical membrane-spanning segments follow: residues 11 to 31 (WWFL…NGAV) and 50 to 70 (TVAL…NAIF). Positions 77–79 (NPA) match the NPA 1 motif. A run of 3 helical transmembrane segments spans residues 95-115 (ALIW…AMIA), 152-172 (FLTE…ASHF), and 180-200 (VPPG…FGGA). The NPA 2 signature appears at 206–208 (NPA). Residues 233 to 253 (WIPVIAPLSAGLVLSIIIGFS) form a helical membrane-spanning segment.

The protein belongs to the MIP/aquaporin (TC 1.A.8) family.

The protein resides in the cell membrane. The enzyme catalyses glycerol(in) = glycerol(out). Its function is as follows. Mediates glycerol diffusion across the cytoplasmic membrane via a pore-type mechanism. The polypeptide is Probable glycerol uptake facilitator protein (glpF) (Mycoplasma genitalium (strain ATCC 33530 / DSM 19775 / NCTC 10195 / G37) (Mycoplasmoides genitalium)).